Here is a 445-residue protein sequence, read N- to C-terminus: tRNA-2-methylthio-N(6)-dimethylallyladenosine synthase (445 aa).

The MTTase N-terminal domain occupies 3–124; the sequence is KNLYIKTYGC…LPELISKIVR (122 aa). 6 residues coordinate [4Fe-4S] cluster: Cys-12, Cys-48, Cys-87, Cys-162, Cys-166, and Cys-169. Positions 148–380 constitute a Radical SAM core domain; the sequence is YPQGASSFIS…QKELMDQQLA (233 aa). Positions 383-445 constitute a TRAM domain; sequence ESCVGSTIKV…SLNSLTGEIL (63 aa).

It belongs to the methylthiotransferase family. MiaB subfamily. As to quaternary structure, monomer. [4Fe-4S] cluster is required as a cofactor.

It is found in the cytoplasm. The enzyme catalyses N(6)-dimethylallyladenosine(37) in tRNA + (sulfur carrier)-SH + AH2 + 2 S-adenosyl-L-methionine = 2-methylsulfanyl-N(6)-dimethylallyladenosine(37) in tRNA + (sulfur carrier)-H + 5'-deoxyadenosine + L-methionine + A + S-adenosyl-L-homocysteine + 2 H(+). Catalyzes the methylthiolation of N6-(dimethylallyl)adenosine (i(6)A), leading to the formation of 2-methylthio-N6-(dimethylallyl)adenosine (ms(2)i(6)A) at position 37 in tRNAs that read codons beginning with uridine. In Rickettsia akari (strain Hartford), this protein is tRNA-2-methylthio-N(6)-dimethylallyladenosine synthase.